We begin with the raw amino-acid sequence, 362 residues long: Acyl-CoA-binding domain-containing protein 3 (362 aa).

Positions 1–22 are cleaved as a signal peptide; it reads MEVFLEMLLTAVVALLFSFLLA. Disordered regions lie at residues 132–151 and 193–214; these read QDEQ…SPEN and VEKS…EKTE. Residues 192–221 are a coiled coil; that stretch reads RVEKSSNMVEESDAEAENEEKTELTIEEDD. Residues 231-318 enclose the ACB domain; it reads LEKAFAAAVN…VSKEIPGLTK (88 aa). Residues 260–264, Lys286, and Tyr305 each bind an acyl-CoA; that span reads FGLHK. The disordered stretch occupies residues 329–362; sequence METSVGLPPNSGSLEDPTNLVTTGVDESSKNGIP.

It belongs to the ACBP family. In terms of tissue distribution, expressed in roots, stems, leaves, flowers and siliques.

It localises to the secreted. The protein resides in the extracellular space. Its function is as follows. Binds medium- and long-chain acyl-CoA esters with very high affinity. Can interact in vitro with arachidonyl-CoA, barely with oleoyl-CoA, but not with palmitoyl-CoA. The chain is Acyl-CoA-binding domain-containing protein 3 (ACBP3) from Arabidopsis thaliana (Mouse-ear cress).